Consider the following 208-residue polypeptide: N-(5'-phosphoribosyl)anthranilate isomerase (208 aa).

This sequence belongs to the TrpF family.

It catalyses the reaction N-(5-phospho-beta-D-ribosyl)anthranilate = 1-(2-carboxyphenylamino)-1-deoxy-D-ribulose 5-phosphate. It functions in the pathway amino-acid biosynthesis; L-tryptophan biosynthesis; L-tryptophan from chorismate: step 3/5. The polypeptide is N-(5'-phosphoribosyl)anthranilate isomerase (Staphylococcus haemolyticus (strain JCSC1435)).